A 165-amino-acid polypeptide reads, in one-letter code: Protein SprT (165 aa).

One can recognise a SprT-like domain in the interval 20 to 162 (EKLAQANLKL…YRCVHCGEQL (143 aa)). His78 contributes to the Zn(2+) binding site. Residue Glu79 is part of the active site. His82 is a binding site for Zn(2+).

The protein belongs to the SprT family. The cofactor is Zn(2+).

It localises to the cytoplasm. The polypeptide is Protein SprT (Escherichia coli (strain SMS-3-5 / SECEC)).